A 271-amino-acid chain; its full sequence is Mannosyl-3-phosphoglycerate phosphatase (271 aa).

Residue Asp13 is the Nucleophile of the active site. 3 residues coordinate Mg(2+): Asp13, Asp15, and Asp214.

Belongs to the HAD-like hydrolase superfamily. MPGP family. It depends on Mg(2+) as a cofactor.

The protein resides in the cytoplasm. The catalysed reaction is 2-O-(alpha-D-mannosyl)-3-phosphoglycerate + H2O = (2R)-2-O-(alpha-D-mannosyl)-glycerate + phosphate. This is Mannosyl-3-phosphoglycerate phosphatase from Escherichia coli (strain K12 / DH10B).